A 104-amino-acid polypeptide reads, in one-letter code: Putative protein 22K (104 aa).

A disordered region spans residues 35–104 (YKQLEKELGE…KAPAAKAPSK (70 aa)). Residues 60 to 78 (PLSEGELEEISEEEEEEGE) are compositionally biased toward acidic residues. Low complexity predominate over residues 94 to 104 (SKAPAAKAPSK).

The polypeptide is Putative protein 22K (Snake adenovirus serotype 1 (SnAdV-1)).